An 863-amino-acid polypeptide reads, in one-letter code: Oleate activated transcription factor 3 (863 aa).

Positions 18-47 form a DNA-binding region, zn(2)-C6 fungal-type; sequence VCTNCKKRKSKCDRTKPCGTCVRLGDVDSC. Polar residues predominate over residues 52–63; the sequence is DSSGQPESSPSL. Residues 52–99 are disordered; it reads DSSGQPESSPSLNDADPLRKQSTPAERISPGFIKKRRSSQTRQDEDHW.

It belongs to the OAF3 family.

It localises to the cytoplasm. The protein localises to the nucleus. It is found in the mitochondrion. Transcriptional inhibitor with a significantly increased number of target genes in response to oleate. The chain is Oleate activated transcription factor 3 (OAF3) from Saccharomyces cerevisiae (strain ATCC 204508 / S288c) (Baker's yeast).